The chain runs to 321 residues: Meiotic drive suppressor wtf26 (321 aa).

Residues 29–68 are disordered; that stretch reads GLLPEYNSEEEGALPTYSDHARSSNPPNTHRENHSSGTTD. 6 consecutive transmembrane segments (helical) span residues 73–93, 110–130, 151–171, 188–208, 210–230, and 243–263; these read FLIKLLISFTPIVLLNALAVC, WTLFGFWCLVCTLALIILTYF, EMMIIIWILWLIICCILFGCV, TISAVLFLIVSSVCIPMWTLW, ALSGMLQVLGIHGIIALLVNG, and GYEIEGFVLFFTGNALFLYEM.

Belongs to the WTF family. As to quaternary structure, homomer. Interacts with other proteins that exhibit high sequence similarity.

The protein localises to the spore membrane. Its subcellular location is the vacuole membrane. In terms of biological role, acts as a suppressor component of the dual wtf meiotic drive system, and can suppress but not confer meiotic drive by compatible poisons. Wtf meiotic drive systems promote unequal transmission of alleles from the parental zygote to progeny spores by encoding a poison and an antidote from the same locus; the poison is trans-acting and forms toxic aggregates in all spores within an ascus, wherease the antidote is spore-specific and targets aggregates for degradation by the vacuole. Meiotic drive by wtf systems therefore lead to poisoning of all progeny that do not inherit the dual poison/antidote allele, or express a compatible antidote. The protein is Meiotic drive suppressor wtf26 of Schizosaccharomyces kambucha (Fission yeast).